Consider the following 757-residue polypeptide: Polyribonucleotide nucleotidyltransferase (757 aa).

Residues Asp-487 and Asp-493 each contribute to the Mg(2+) site. Positions 554 to 613 constitute a KH domain; it reads PRITTVRVKPDQIRLIIGPGGKTIKGIVDQTGVAIDVEDDGTVNVASADSDAVKRALDII. In terms of domain architecture, S1 motif spans 623-691; it reads GATYKGTVKR…REGKIRLSRR (69 aa). Residues 697–757 are disordered; the sequence is PEGEEGDRAR…PPRERRERRS (61 aa). Basic and acidic residues-rich tracts occupy residues 702–711 and 719–757; these read GDRARERMAQ and PRRD…ERRS.

This sequence belongs to the polyribonucleotide nucleotidyltransferase family. Requires Mg(2+) as cofactor.

Its subcellular location is the cytoplasm. It catalyses the reaction RNA(n+1) + phosphate = RNA(n) + a ribonucleoside 5'-diphosphate. Involved in mRNA degradation. Catalyzes the phosphorolysis of single-stranded polyribonucleotides processively in the 3'- to 5'-direction. This is Polyribonucleotide nucleotidyltransferase from Sorangium cellulosum (strain So ce56) (Polyangium cellulosum (strain So ce56)).